Consider the following 402-residue polypeptide: Endoplasmic reticulum junction formation protein lunapark-B (402 aa).

The Cytoplasmic segment spans residues 1 to 45 (MGAIISRWKTKPSTVELLESLDKDIKDLEEFRAKNQRLLKLWVGR). Residues 46 to 66 (LLFYSSALYLLTCLCVYYLYF) traverse the membrane as a helical segment. At 67–77 (PQQWGARLITA) the chain is on the lumenal side. Residues 78-98 (LPLLAFPALVLLLRKMLIFLF) traverse the membrane as a helical segment. Residues 99–402 (SKRTERNNDK…EEQKKEDESN (304 aa)) lie on the Cytoplasmic side of the membrane. A coiled-coil region spans residues 100–128 (KRTERNNDKLEDLKTQKRKILEEVMETET). The interval 142 to 240 (ESKKKAEAEA…PGPGSGMRPP (99 aa)) is disordered. Polar residues predominate over residues 205–222 (SASTPAGASQAETPQQMM). Residues 276-301 (CQQCFSHNGMALKEEFEFVAFRCAYC) form a C4-type; plays a role in ER morphology zinc finger. A disordered region spans residues 311 to 402 (RPQAPRLPEF…EEQKKEDESN (92 aa)). The segment covering 321–330 (SFERRLRSES) has biased composition (basic and acidic residues). Residues 341–352 (TPEDSDAPEDDM) show a composition bias toward acidic residues. The span at 385 to 402 (PHAEAEALEEQKKEDESN) shows a compositional bias: basic and acidic residues.

This sequence belongs to the lunapark family. In terms of assembly, homodimer; homodimerization requires the C4-type zinc finger motif and decreases during mitosis in a phosphorylation-dependent manner. Phosphorylated. Phosphorylation occurs during interphase. Phosphorylation also occurs during mitosis; these phosphorylations reduce both its homodimerization and the ER three-way tubular junction formation.

It is found in the endoplasmic reticulum membrane. In terms of biological role, endoplasmic reticulum (ER)-shaping membrane protein that plays a role in determining ER morphology. Involved in the stabilization of nascent three-way ER tubular junctions within the ER network. May also play a role as a curvature-stabilizing protein within three-way ER tubular junction network. The sequence is that of Endoplasmic reticulum junction formation protein lunapark-B (lnpkb) from Danio rerio (Zebrafish).